Here is a 195-residue protein sequence, read N- to C-terminus: DnaJ homolog subfamily C member 5 (195 aa).

A J domain is found at 13 to 82 (GDSLYIVLGL…RNIYDKYGSL (70 aa)). Positions 162–195 (DMEKEGDGAIVVQPTSATETTQLTSDSHPSYHTE) are disordered. A compositionally biased stretch (polar residues) spans 174-189 (QPTSATETTQLTSDSH).

In terms of processing, palmitoylated. Palmitoylation occurs probably in the cysteine-rich domain and regulates DNAJC5 stable membrane attachment.

The protein resides in the cytoplasm. It is found in the cytosol. It localises to the membrane. Its subcellular location is the cytoplasmic vesicle. The protein localises to the secretory vesicle. The protein resides in the chromaffin granule membrane. It is found in the melanosome. It localises to the cell membrane. In terms of biological role, may have an important role in presynaptic function. May be involved in calcium-dependent neurotransmitter release at nerve endings. In Tetronarce californica (Pacific electric ray), this protein is DnaJ homolog subfamily C member 5.